We begin with the raw amino-acid sequence, 372 residues long: Queuine tRNA-ribosyltransferase (372 aa).

Asp-89 functions as the Proton acceptor in the catalytic mechanism. Substrate is bound by residues 89-93 (DSGGF), Asp-161, and Gly-232. Residues 262–268 (GIGDLPS) are RNA binding. Asp-281 (nucleophile) is an active-site residue. The segment at 286–290 (TKAAR) is RNA binding; important for wobble base 34 recognition. Zn(2+) contacts are provided by Cys-319, Cys-321, Cys-324, and His-351.

It belongs to the queuine tRNA-ribosyltransferase family. As to quaternary structure, homodimer. Within each dimer, one monomer is responsible for RNA recognition and catalysis, while the other monomer binds to the replacement base PreQ1. Requires Zn(2+) as cofactor.

The enzyme catalyses 7-aminomethyl-7-carbaguanine + guanosine(34) in tRNA = 7-aminomethyl-7-carbaguanosine(34) in tRNA + guanine. Its pathway is tRNA modification; tRNA-queuosine biosynthesis. Functionally, catalyzes the base-exchange of a guanine (G) residue with the queuine precursor 7-aminomethyl-7-deazaguanine (PreQ1) at position 34 (anticodon wobble position) in tRNAs with GU(N) anticodons (tRNA-Asp, -Asn, -His and -Tyr). Catalysis occurs through a double-displacement mechanism. The nucleophile active site attacks the C1' of nucleotide 34 to detach the guanine base from the RNA, forming a covalent enzyme-RNA intermediate. The proton acceptor active site deprotonates the incoming PreQ1, allowing a nucleophilic attack on the C1' of the ribose to form the product. After dissociation, two additional enzymatic reactions on the tRNA convert PreQ1 to queuine (Q), resulting in the hypermodified nucleoside queuosine (7-(((4,5-cis-dihydroxy-2-cyclopenten-1-yl)amino)methyl)-7-deazaguanosine). The chain is Queuine tRNA-ribosyltransferase from Chlamydia trachomatis serovar A (strain ATCC VR-571B / DSM 19440 / HAR-13).